Here is a 142-residue protein sequence, read N- to C-terminus: ATP synthase epsilon chain (142 aa).

Belongs to the ATPase epsilon chain family. As to quaternary structure, F-type ATPases have 2 components, CF(1) - the catalytic core - and CF(0) - the membrane proton channel. CF(1) has five subunits: alpha(3), beta(3), gamma(1), delta(1), epsilon(1). CF(0) has three main subunits: a, b and c.

The protein resides in the cell inner membrane. Its function is as follows. Produces ATP from ADP in the presence of a proton gradient across the membrane. This Coxiella burnetii (strain CbuK_Q154) (Coxiella burnetii (strain Q154)) protein is ATP synthase epsilon chain.